The sequence spans 144 residues: Small ribosomal subunit protein bS6 (144 aa).

The interval Glu-97 to Glu-144 is disordered. The span at Arg-105–Glu-137 shows a compositional bias: basic and acidic residues.

The protein belongs to the bacterial ribosomal protein bS6 family.

Binds together with bS18 to 16S ribosomal RNA. In Afipia carboxidovorans (strain ATCC 49405 / DSM 1227 / KCTC 32145 / OM5) (Oligotropha carboxidovorans), this protein is Small ribosomal subunit protein bS6.